We begin with the raw amino-acid sequence, 86 residues long: Small ribosomal subunit protein uS17 (86 aa).

Belongs to the universal ribosomal protein uS17 family. As to quaternary structure, part of the 30S ribosomal subunit.

Its function is as follows. One of the primary rRNA binding proteins, it binds specifically to the 5'-end of 16S ribosomal RNA. The chain is Small ribosomal subunit protein uS17 from Streptococcus pyogenes serotype M3 (strain ATCC BAA-595 / MGAS315).